The sequence spans 215 residues: Deoxyribose-phosphate aldolase (215 aa).

Asp-90 (proton donor/acceptor) is an active-site residue. The active-site Schiff-base intermediate with acetaldehyde is Lys-152. Lys-181 acts as the Proton donor/acceptor in catalysis.

It belongs to the DeoC/FbaB aldolase family. DeoC type 1 subfamily.

The protein resides in the cytoplasm. It catalyses the reaction 2-deoxy-D-ribose 5-phosphate = D-glyceraldehyde 3-phosphate + acetaldehyde. It functions in the pathway carbohydrate degradation; 2-deoxy-D-ribose 1-phosphate degradation; D-glyceraldehyde 3-phosphate and acetaldehyde from 2-deoxy-alpha-D-ribose 1-phosphate: step 2/2. In terms of biological role, catalyzes a reversible aldol reaction between acetaldehyde and D-glyceraldehyde 3-phosphate to generate 2-deoxy-D-ribose 5-phosphate. The chain is Deoxyribose-phosphate aldolase from Ureaplasma parvum serovar 3 (strain ATCC 27815 / 27 / NCTC 11736).